The chain runs to 228 residues: 2-C-methyl-D-erythritol 4-phosphate cytidylyltransferase (228 aa).

Belongs to the IspD/TarI cytidylyltransferase family. IspD subfamily.

The enzyme catalyses 2-C-methyl-D-erythritol 4-phosphate + CTP + H(+) = 4-CDP-2-C-methyl-D-erythritol + diphosphate. Its pathway is isoprenoid biosynthesis; isopentenyl diphosphate biosynthesis via DXP pathway; isopentenyl diphosphate from 1-deoxy-D-xylulose 5-phosphate: step 2/6. Functionally, catalyzes the formation of 4-diphosphocytidyl-2-C-methyl-D-erythritol from CTP and 2-C-methyl-D-erythritol 4-phosphate (MEP). This chain is 2-C-methyl-D-erythritol 4-phosphate cytidylyltransferase, found in Crocosphaera subtropica (strain ATCC 51142 / BH68) (Cyanothece sp. (strain ATCC 51142)).